The following is a 241-amino-acid chain: Probable transcriptional regulatory protein Maqu_2154 (241 aa).

This sequence belongs to the TACO1 family.

The protein resides in the cytoplasm. The chain is Probable transcriptional regulatory protein Maqu_2154 from Marinobacter nauticus (strain ATCC 700491 / DSM 11845 / VT8) (Marinobacter aquaeolei).